The chain runs to 284 residues: MTAQIIDGKAIAQSIRTKLSEKVTARKEAGQRVPGLAVILVGADPASQVYVGSKRKACEEVGFISRSYDLETNCSEDELLSLIDSLNDDPTIDGILVQLPLPAHIEDSKVIERIRPDKDVDGFHPYNVGRLAQRIPVLRSCTPMGIMTLIKSTGVDTYGLDAVVVGASNIVGRPMTLELLLAGCTTTTCHRFTKNLEQKIRQADLVVVAVGKPGFIPGEWIKPGAIVIDVGINRLDNGTLVGDVQYEAAAQNASFITPVPGGVGPMTIASLLENTLYAAEQYHD.

NADP(+)-binding positions include 166 to 168 and Ile232; that span reads GAS.

This sequence belongs to the tetrahydrofolate dehydrogenase/cyclohydrolase family. Homodimer.

It carries out the reaction (6R)-5,10-methylene-5,6,7,8-tetrahydrofolate + NADP(+) = (6R)-5,10-methenyltetrahydrofolate + NADPH. The catalysed reaction is (6R)-5,10-methenyltetrahydrofolate + H2O = (6R)-10-formyltetrahydrofolate + H(+). Its pathway is one-carbon metabolism; tetrahydrofolate interconversion. Functionally, catalyzes the oxidation of 5,10-methylenetetrahydrofolate to 5,10-methenyltetrahydrofolate and then the hydrolysis of 5,10-methenyltetrahydrofolate to 10-formyltetrahydrofolate. The polypeptide is Bifunctional protein FolD (Shewanella sp. (strain W3-18-1)).